Reading from the N-terminus, the 207-residue chain is MPLPDFRLIRLLPLAALVLTACSVTTPKGPGKSPDSPQWRQHQQDVRNLNQYQTRGAFAYISDQQKVYARFFWQQTGQDRYRLLLTNPLGSTELELNAQPGNVQLVDNKGQRYTADDAEEMIGKLTGMPIPLNSLRQWILGLPGDATDYKLDDQYRLSEITYSQNGKNWKVVYCGYDTKTQPAMPANMELTDGGQRIKLKMDNWIVK.

Positions 1–21 (MPLPDFRLIRLLPLAALVLTA) are cleaved as a signal peptide. Residue Cys-22 is the site of N-palmitoyl cysteine attachment. Residue Cys-22 is the site of S-diacylglycerol cysteine attachment.

It belongs to the LolB family. Monomer.

The protein resides in the cell outer membrane. Functionally, plays a critical role in the incorporation of lipoproteins in the outer membrane after they are released by the LolA protein. This chain is Outer-membrane lipoprotein LolB, found in Shigella dysenteriae serotype 1 (strain Sd197).